The chain runs to 333 residues: MIFDQKGIRKRSITVAYFYNTISQKCCDLKLRRVNNVDEQKRRIYERDLHRPGLALAGFTNLFTYKRVQIFGNTETRFLNHLDDEKERNRLFENFVRFKIPCIILTSNNKLPESLIEMATRAEIPVYSTRCSSTKAIYNITDFLDDQFSIYQQYHGSMVDVYGVGVLLVGKSGLGKSEVALDLIERGHGLVADDAVVIRRKGESTTLMARRNNIIDHFMEIRGLGVVDMKANFGIRAIREQKEVQVVAELMHWDSDTEYERLGLDAKSTKILGVELPLVQLPILPGKNITVIIEVVALNFLLKRYSNYVAAEALHSRISQVINSERTNFDGDE.

Active-site residues include His155 and Lys176. ATP is bound at residue 170–177; the sequence is GKSGLGKS. Residue Ser177 coordinates Mg(2+). Asp194 functions as the Proton acceptor; for phosphorylation activity. Proton donor; for dephosphorylation activity in the catalytic mechanism. Positions 219 to 228 are important for the catalytic mechanism of both phosphorylation and dephosphorylation; it reads MEIRGLGVVD. Glu220 serves as a coordination point for Mg(2+). Residue Arg261 is part of the active site. Residues 282-287 are important for the catalytic mechanism of dephosphorylation; it reads PILPGK.

It belongs to the HPrK/P family. Homohexamer. Requires Mg(2+) as cofactor.

It catalyses the reaction [HPr protein]-L-serine + ATP = [HPr protein]-O-phospho-L-serine + ADP + H(+). It carries out the reaction [HPr protein]-O-phospho-L-serine + phosphate + H(+) = [HPr protein]-L-serine + diphosphate. Functionally, catalyzes the ATP- as well as the pyrophosphate-dependent phosphorylation of a specific serine residue in HPr, a phosphocarrier protein of the phosphoenolpyruvate-dependent sugar phosphotransferase system (PTS). HprK/P also catalyzes the pyrophosphate-producing, inorganic phosphate-dependent dephosphorylation (phosphorolysis) of seryl-phosphorylated HPr (P-Ser-HPr). This chain is HPr kinase/phosphorylase, found in Chlorobium chlorochromatii (strain CaD3).